The primary structure comprises 251 residues: Flap endonuclease Xni (251 aa).

Aspartate 104 contacts Mg(2+). The region spanning 160–249 (VQPQQLPDYW…IDGNLQQLRL (90 aa)) is the 5'-3' exonuclease domain. K(+) is bound by residues leucine 171, alanine 172, proline 180, valine 182, and isoleucine 185. Residues 184–189 (GIGPKS) form an interaction with DNA region.

Belongs to the Xni family. The cofactor is Mg(2+). K(+) serves as cofactor.

Its function is as follows. Has flap endonuclease activity. During DNA replication, flap endonucleases cleave the 5'-overhanging flap structure that is generated by displacement synthesis when DNA polymerase encounters the 5'-end of a downstream Okazaki fragment. The chain is Flap endonuclease Xni from Escherichia coli O17:K52:H18 (strain UMN026 / ExPEC).